The primary structure comprises 342 residues: Methionine import ATP-binding protein MetN 3 (342 aa).

The ABC transporter domain occupies 2–241 (ISLKGISKTF…PKEQMTKEFV (240 aa)). 38–45 (GYSGAGKS) is a binding site for ATP.

This sequence belongs to the ABC transporter superfamily. Methionine importer (TC 3.A.1.24) family. The complex is composed of two ATP-binding proteins (MetN), two transmembrane proteins (MetI) and a solute-binding protein (MetQ).

The protein localises to the cell membrane. The catalysed reaction is L-methionine(out) + ATP + H2O = L-methionine(in) + ADP + phosphate + H(+). It carries out the reaction D-methionine(out) + ATP + H2O = D-methionine(in) + ADP + phosphate + H(+). Part of the ABC transporter complex MetNIQ involved in methionine import. Responsible for energy coupling to the transport system. This chain is Methionine import ATP-binding protein MetN 3, found in Shouchella clausii (strain KSM-K16) (Alkalihalobacillus clausii).